A 130-amino-acid polypeptide reads, in one-letter code: S-adenosylmethionine decarboxylase proenzyme (130 aa).

The Schiff-base intermediate with substrate; via pyruvic acid role is filled by Ser78. Ser78 carries the pyruvic acid (Ser); by autocatalysis modification. His83 serves as the catalytic Proton acceptor; for processing activity. Cys98 acts as the Proton donor; for catalytic activity in catalysis.

This sequence belongs to the prokaryotic AdoMetDC family. Type 1 subfamily. As to quaternary structure, heterotetramer of two alpha and two beta chains arranged as a dimer of alpha/beta heterodimers. It depends on pyruvate as a cofactor. Post-translationally, is synthesized initially as an inactive proenzyme. Formation of the active enzyme involves a self-maturation process in which the active site pyruvoyl group is generated from an internal serine residue via an autocatalytic post-translational modification. Two non-identical subunits are generated from the proenzyme in this reaction, and the pyruvate is formed at the N-terminus of the alpha chain, which is derived from the carboxyl end of the proenzyme. The post-translation cleavage follows an unusual pathway, termed non-hydrolytic serinolysis, in which the side chain hydroxyl group of the serine supplies its oxygen atom to form the C-terminus of the beta chain, while the remainder of the serine residue undergoes an oxidative deamination to produce ammonia and the pyruvoyl group blocking the N-terminus of the alpha chain.

The enzyme catalyses S-adenosyl-L-methionine + H(+) = S-adenosyl 3-(methylsulfanyl)propylamine + CO2. The protein operates within amine and polyamine biosynthesis; S-adenosylmethioninamine biosynthesis; S-adenosylmethioninamine from S-adenosyl-L-methionine: step 1/1. In terms of biological role, catalyzes the decarboxylation of S-adenosylmethionine to S-adenosylmethioninamine (dcAdoMet), the propylamine donor required for the synthesis of the polyamines spermine and spermidine from the diamine putrescine. This Aeropyrum pernix (strain ATCC 700893 / DSM 11879 / JCM 9820 / NBRC 100138 / K1) protein is S-adenosylmethionine decarboxylase proenzyme.